A 446-amino-acid polypeptide reads, in one-letter code: Lysine histidine transporter 1 (446 aa).

At 1–37 the chain is on the cytoplasmic side; sequence MVAQAPHDDHQDDEKLAAARQKEIEDWLPITSSRNAK. A helical membrane pass occupies residues 38 to 58; the sequence is WWYSAFHNVTAMVGAGVLGLP. The Extracellular portion of the chain corresponds to 59-63; it reads YAMSQ. A helical membrane pass occupies residues 64-84; sequence LGWGPGIAVLVLSWVITLYTL. The Cytoplasmic portion of the chain corresponds to 85-115; that stretch reads WQMVEMHEMVPGKRFDRYHELGQHAFGEKLG. A helical transmembrane segment spans residues 116–136; the sequence is LYIVVPQQLIVEIGVCIVYMV. Residues 137–157 lie on the Extracellular side of the membrane; sequence TGGKSLKKFHELVCDDCKPIK. Residues 158–178 traverse the membrane as a helical segment; that stretch reads LTYFIMIFASVHFVLSHLPNF. The Cytoplasmic segment spans residues 179–180; it reads NS. A helical transmembrane segment spans residues 181–201; it reads ISGVSLAAAVMSLSYSTIAWA. Over 202 to 227 the chain is Extracellular; that stretch reads SSASKGVQEDVQYGYKAKTTAGTVFN. Residues 228–248 traverse the membrane as a helical segment; that stretch reads FFSGLGDVAFAYAGHNVVLEI. Topologically, residues 249–268 are cytoplasmic; the sequence is QATIPSTPEKPSKGPMWRGV. A helical transmembrane segment spans residues 269 to 289; the sequence is IVAYIVVALCYFPVALVGYYI. Residues 290-305 are Extracellular-facing; sequence FGNGVEDNILMSLKKP. The chain crosses the membrane as a helical span at residues 306–326; the sequence is AWLIATANIFVVIHVIGSYQI. Residues 327–352 lie on the Cytoplasmic side of the membrane; it reads YAMPVFDMMETLLVKKLNFRPTTTLR. The chain crosses the membrane as a helical span at residues 353-375; that stretch reads FFVRNFYVAATMFVGMTFPFFGG. Topologically, residues 376–378 are extracellular; sequence LLA. Residues 379 to 401 traverse the membrane as a helical segment; sequence FFGGFAFAPTTYFLPCVIWLAIY. The Cytoplasmic portion of the chain corresponds to 402–409; that stretch reads KPKKYSLS. The helical transmembrane segment at 410–430 threads the bilayer; it reads WWANWVCIVFGLFLMVLSPIG. Residues 431–446 are Extracellular-facing; sequence GLRTIVIQAKGYKFYS.

Belongs to the amino acid/polyamine transporter 2 family. Amino acid/auxin permease (AAAP) (TC 2.A.18.2) subfamily. Expressed in roots, stems, flowers, leaves, siliques and pollen. Found in the tips of roots and in the rhizodermis of emerging roots and in lateral roots. Higher expression in older leaves as compared to joung leaves. Detected first at the hydathodes, then in the epidermis and finally in matures leaves in all mesophyll cells. Not detected in vascular bundles or in seeds.

The protein localises to the cell membrane. With respect to regulation, inhibited by carbonlycyanide m-chlorophenylhydrazone (CCCP) and DEPC. In terms of biological role, amino acid-proton symporter. Transporter with a broad specificity for histidine, lysine, glutamic acid, alanine, serine, proline and glycine. Involved in both apoplastic transport of amino acids in leaves and their uptake by roots. The sequence is that of Lysine histidine transporter 1 (LHT1) from Arabidopsis thaliana (Mouse-ear cress).